We begin with the raw amino-acid sequence, 341 residues long: Porin-like protein L (341 aa).

Residues M1 to A21 form the signal peptide.

It belongs to the Gram-negative porin family. In terms of assembly, homotrimer.

The protein localises to the cell outer membrane. Forms pores that allow passive diffusion of small molecules across the outer membrane. The sequence is that of Porin-like protein L (ompL) from Photobacterium profundum (strain SS9).